Here is a 459-residue protein sequence, read N- to C-terminus: Cyclooctatin synthase (459 aa).

A heme-binding site is contributed by C408.

It belongs to the cytochrome P450 family. It depends on heme as a cofactor.

It carries out the reaction cyclooctat-9-ene-5,7-diol + AH2 + O2 = cyclooctatin + A + H2O. Involved in the biosynthesis of cyclooctatin, a potent inhibitor of lysophospholipase. Catalyzes the hydroxylation of cyclooctat-9-ene-5,7-diol at C-18 to yield the final product, cyclooctatin. The polypeptide is Cyclooctatin synthase (Streptomyces melanosporofaciens).